A 190-amino-acid chain; its full sequence is Ribosome hibernation promotion factor (190 aa).

Belongs to the HPF/YfiA ribosome-associated protein family. Long HPF subfamily. Interacts with 100S ribosomes.

Its subcellular location is the cytoplasm. Functionally, required for dimerization of active 70S ribosomes into 100S ribosomes in stationary phase; 100S ribosomes are translationally inactive and sometimes present during exponential growth. This is Ribosome hibernation promotion factor from Rhizobium meliloti (strain 1021) (Ensifer meliloti).